A 66-amino-acid polypeptide reads, in one-letter code: Large ribosomal subunit protein bL35 (66 aa).

The span at 1 to 26 (MPKMKTHRGAAKRVKRTGSGKLKRSR) shows a compositional bias: basic residues. Positions 1-49 (MPKMKTHRGAAKRVKRTGSGKLKRSRAFTSHLFANKSTKQKRKLRKASL) are disordered.

The protein belongs to the bacterial ribosomal protein bL35 family.

The sequence is that of Large ribosomal subunit protein bL35 from Staphylococcus saprophyticus subsp. saprophyticus (strain ATCC 15305 / DSM 20229 / NCIMB 8711 / NCTC 7292 / S-41).